Consider the following 130-residue polypeptide: Anti-adapter protein IraD (130 aa).

It belongs to the GpW/Gp25 family. IraD subfamily. Interacts with RssB.

It localises to the cytoplasm. In terms of biological role, inhibits RpoS proteolysis by regulating RssB activity, thereby increasing the stability of the sigma stress factor RpoS during oxidative stress. Its effect on RpoS stability is due to its interaction with RssB, which probably blocks the interaction of RssB with RpoS, and the consequent delivery of the RssB-RpoS complex to the ClpXP protein degradation pathway. The sequence is that of Anti-adapter protein IraD from Escherichia coli O7:K1 (strain IAI39 / ExPEC).